Here is a 1059-residue protein sequence, read N- to C-terminus: Transmembrane protease serine 9 (1059 aa).

Over 1–29 (MEPTVADVHLVPRTTKEVPALDAACCRAA) the chain is Cytoplasmic. The helical; Signal-anchor for type II membrane protein transmembrane segment at 30 to 50 (SIGVVATSLVVLTLGVLLAFL) threads the bilayer. Topologically, residues 51–1059 (STQGFHVDHT…RGWIGQHIQE (1009 aa)) are extracellular. The region spanning 153-190 (RCPGNSFSCGNSQCVTKVNPECDDQEDCSDGSDEAHCE) is the LDL-receptor class A domain. 4 cysteine pairs are disulfide-bonded: Cys-154–Cys-166, Cys-161–Cys-180, Cys-174–Cys-189, and Cys-228–Cys-244. The Peptidase S1 1 domain occupies 203-436 (IVGGMEASPG…LRDWILEATT (234 aa)). Catalysis depends on charge relay system residues His-243 and Asp-292. Cystine bridges form between Cys-326-Cys-393, Cys-358-Cys-372, and Cys-383-Cys-412. Ser-387 (charge relay system) is an active-site residue. The disordered stretch occupies residues 443–469 (APTMAPAPAAPSTAWPTSPESPVVSTP). The region spanning 504-736 (VVGGFGAASG…LKGWILEIMS (233 aa)) is the Peptidase S1 2 domain. A disulfide bond links Cys-529 and Cys-545. The active-site Charge relay system is the His-544. The N-linked (GlcNAc...) asparagine glycan is linked to Asn-547. The active-site Charge relay system is the Asp-592. 3 disulfides stabilise this stretch: Cys-626/Cys-693, Cys-658/Cys-672, and Cys-683/Cys-712. N-linked (GlcNAc...) asparagine glycans are attached at residues Asn-638 and Asn-663. Ser-687 serves as the catalytic Charge relay system. The interval 758 to 814 (TTAGLTVPGATPSRPTPGAASRVTGQPANSTLSAVSTTARGQTPFPDAPEATTHTQL) is disordered. Positions 780 to 798 (VTGQPANSTLSAVSTTARG) are enriched in polar residues. N-linked (GlcNAc...) asparagine glycosylation occurs at Asn-786. In terms of domain architecture, Peptidase S1 3 spans 827–1058 (IVGGSAAGRG…VRGWIGQHIQ (232 aa)). 4 disulfides stabilise this stretch: Cys-853–Cys-869, Cys-949–Cys-1015, Cys-980–Cys-994, and Cys-1005–Cys-1034.

This sequence belongs to the peptidase S1 family. In terms of processing, proteolytically cleaved to generate 3 independent serine protease chains. The cleaved chains may remain attached to the membrane thanks to disulfide bonds. It is unclear whether cleavage always takes place. Expressed in fetal human tissues, such as kidney, liver, lung and brain, and in a variety of tumor cell lines. Weakly expressed in adult tissues including skeletal muscle, liver, placenta and heart.

Its subcellular location is the cell membrane. With respect to regulation, inhibited by serine protease inhibitors PMSF and 4-(2-aminoethyl)benzenesulfonyl fluoride, but not by EDTA. In terms of biological role, serase-1 and serase-2 are serine proteases that hydrolyze the peptides N-t-Boc-Gln-Ala-Arg-AMC and N-t-Boc-Gln-Gly-Arg-AMC. In contrast, N-t-Boc-Ala-Phe-Lys-AMC and N-t-Boc-Ala-Pro-Ala-AMC are not significantly hydrolyzed. The chain is Transmembrane protease serine 9 (TMPRSS9) from Homo sapiens (Human).